Consider the following 339-residue polypeptide: Ferrochelatase (339 aa).

Residues His-209 and Glu-290 each coordinate Fe cation.

The protein belongs to the ferrochelatase family.

It localises to the cytoplasm. It catalyses the reaction heme b + 2 H(+) = protoporphyrin IX + Fe(2+). Its pathway is porphyrin-containing compound metabolism; protoheme biosynthesis; protoheme from protoporphyrin-IX: step 1/1. Its function is as follows. Catalyzes the ferrous insertion into protoporphyrin IX. This is Ferrochelatase from Rhizobium meliloti (strain 1021) (Ensifer meliloti).